We begin with the raw amino-acid sequence, 467 residues long: Mitogen-activated protein kinase kinase kinase 8 (467 aa).

At T80 the chain carries Phosphothreonine. Residues S138 and S141 each carry the phosphoserine modification. Residues 144–152 (VPRGAFGKV) and K167 contribute to the ATP site. Positions 146–388 (RGAFGKVYLA…AADLLKHEAL (243 aa)) constitute a Protein kinase domain. D253 (proton acceptor) is an active-site residue. A Phosphothreonine modification is found at T290. S400 and S443 each carry phosphoserine.

This sequence belongs to the protein kinase superfamily. STE Ser/Thr protein kinase family. MAP kinase kinase kinase subfamily. As to quaternary structure, forms a ternary complex with NFKB1/p105 and TNIP2. Interacts with NFKB1; the interaction increases the stability of MAP3K8 but inhibits its MEK phosphorylation activity, whereas loss of interaction following LPS stimulation leads to its degradation. Interacts with CD40 and TRAF6; the interaction is required for ERK activation. Interacts with KSR2; the interaction inhibits ERK and NF-kappa-B activation. Mg(2+) serves as cofactor. Post-translationally, autophosphorylated. Expressed in spleen, thymus, liver and lung.

It is found in the cytoplasm. It catalyses the reaction L-seryl-[protein] + ATP = O-phospho-L-seryl-[protein] + ADP + H(+). The catalysed reaction is L-threonyl-[protein] + ATP = O-phospho-L-threonyl-[protein] + ADP + H(+). Its function is as follows. Required for lipopolysaccharide (LPS)-induced, TLR4-mediated activation of the MAPK/ERK pathway in macrophages, thus being critical for production of the pro-inflammatory cytokine TNF-alpha (TNF) during immune responses. Involved in the regulation of T-helper cell differentiation and IFNG expression in T-cells. Involved in mediating host resistance to bacterial infection through negative regulation of type I interferon (IFN) production. Transduces CD40 and TNFRSF1A signals that activate ERK in B-cells and macrophages, and thus may play a role in the regulation of immunoglobulin production. May also play a role in the transduction of TNF signals that activate JNK and NF-kappa-B in some cell types. In adipocytes, activates MAPK/ERK pathway in an IKBKB-dependent manner in response to IL1B and TNF, but not insulin, leading to induction of lipolysis. Plays a role in the cell cycle. This chain is Mitogen-activated protein kinase kinase kinase 8 (Map3k8), found in Rattus norvegicus (Rat).